A 469-amino-acid chain; its full sequence is Threonine synthase (469 aa).

At Lys-112 the chain carries N6-(pyridoxal phosphate)lysine.

Belongs to the threonine synthase family. It depends on pyridoxal 5'-phosphate as a cofactor.

It carries out the reaction O-phospho-L-homoserine + H2O = L-threonine + phosphate. It functions in the pathway amino-acid biosynthesis; L-threonine biosynthesis; L-threonine from L-aspartate: step 5/5. In terms of biological role, catalyzes the gamma-elimination of phosphate from L-phosphohomoserine and the beta-addition of water to produce L-threonine. The protein is Threonine synthase (thrC) of Pseudomonas aeruginosa (strain ATCC 15692 / DSM 22644 / CIP 104116 / JCM 14847 / LMG 12228 / 1C / PRS 101 / PAO1).